Here is a 357-residue protein sequence, read N- to C-terminus: 3-isopropylmalate dehydrogenase (357 aa).

77-90 is an NAD(+) binding site; the sequence is GPKWDTLPGEKRPE. The substrate site is built by R97, R107, R136, and D224. Mg(2+)-binding residues include D224, D248, and D252. 282 to 294 lines the NAD(+) pocket; that stretch reads GSAPDIAGQDLAN.

The protein belongs to the isocitrate and isopropylmalate dehydrogenases family. LeuB type 1 subfamily. As to quaternary structure, homodimer. Mg(2+) is required as a cofactor. It depends on Mn(2+) as a cofactor.

The protein resides in the cytoplasm. The enzyme catalyses (2R,3S)-3-isopropylmalate + NAD(+) = 4-methyl-2-oxopentanoate + CO2 + NADH. The protein operates within amino-acid biosynthesis; L-leucine biosynthesis; L-leucine from 3-methyl-2-oxobutanoate: step 3/4. Its function is as follows. Catalyzes the oxidation of 3-carboxy-2-hydroxy-4-methylpentanoate (3-isopropylmalate) to 3-carboxy-4-methyl-2-oxopentanoate. The product decarboxylates to 4-methyl-2 oxopentanoate. The polypeptide is 3-isopropylmalate dehydrogenase (Clostridium acetobutylicum (strain ATCC 824 / DSM 792 / JCM 1419 / IAM 19013 / LMG 5710 / NBRC 13948 / NRRL B-527 / VKM B-1787 / 2291 / W)).